The sequence spans 525 residues: GMP synthase [glutamine-hydrolyzing] (525 aa).

The 200-residue stretch at 8–207 (KILILDFGSQ…ALDICGCAAN (200 aa)) folds into the Glutamine amidotransferase type-1 domain. The Nucleophile role is filled by Cys-85. Catalysis depends on residues His-181 and Glu-183. The GMPS ATP-PPase domain maps to 208-400 (WKPSSIIEDA…LGLPYNMLYR (193 aa)). An ATP-binding site is contributed by 235–241 (SGGVDSS).

Homodimer.

It carries out the reaction XMP + L-glutamine + ATP + H2O = GMP + L-glutamate + AMP + diphosphate + 2 H(+). It functions in the pathway purine metabolism; GMP biosynthesis; GMP from XMP (L-Gln route): step 1/1. In terms of biological role, catalyzes the synthesis of GMP from XMP. In Shewanella putrefaciens (strain CN-32 / ATCC BAA-453), this protein is GMP synthase [glutamine-hydrolyzing].